We begin with the raw amino-acid sequence, 210 residues long: Holliday junction resolvase RecU (210 aa).

Mg(2+) contacts are provided by T93, D95, E108, and Q127.

It belongs to the RecU family. It depends on Mg(2+) as a cofactor.

The protein resides in the cytoplasm. It carries out the reaction Endonucleolytic cleavage at a junction such as a reciprocal single-stranded crossover between two homologous DNA duplexes (Holliday junction).. Endonuclease that resolves Holliday junction intermediates in genetic recombination. Cleaves mobile four-strand junctions by introducing symmetrical nicks in paired strands. Promotes annealing of linear ssDNA with homologous dsDNA. Required for DNA repair, homologous recombination and chromosome segregation. The protein is Holliday junction resolvase RecU of Lactobacillus helveticus (strain DPC 4571).